The primary structure comprises 1097 residues: Cyclin-T (1097 aa).

Disordered stretches follow at residues 319–782 (SNIT…SNGI), 804–936 (LLKP…SLQA), and 985–1097 (AAPV…YNKK). A compositionally biased stretch (basic and acidic residues) spans 332 to 350 (DSRDRDRDRERERERERDP). Low complexity-rich tracts occupy residues 373-390 (SSSV…SSSS), 420-456 (PSSH…GRPS), 467-478 (GMPPVGVGMPPH), and 489-511 (PQQP…SGMS). Positions 580 to 591 (LPYSQSQSYGHM) are enriched in polar residues. Low complexity predominate over residues 592 to 606 (QQQPVPQSQQQQMPP). Residues 609–620 (SQHSLQSKNSLF) are compositionally biased toward polar residues. The span at 652-675 (HDYKLNSHPRDKESPKKERLTPTK) shows a compositional bias: basic and acidic residues. A compositionally biased stretch (low complexity) spans 687 to 698 (GSGNSSSGSGSS). The segment covering 860-870 (GEIKEESSSKS) has biased composition (basic and acidic residues). Residues 871 to 883 (EKKKKKDKHKHKE) are compositionally biased toward basic residues. A compositionally biased stretch (basic and acidic residues) spans 884–895 (KDKSKDKTEKEE). Serine 916 bears the Phosphoserine mark. Residues 993-1007 (GAGGGGYSSSGGSSS) show a composition bias toward gly residues. Residues 1016–1031 (SDRDRDKESKKNKSQD) are compositionally biased toward basic and acidic residues. A compositionally biased stretch (gly residues) spans 1037–1050 (GAGGGIFNPLGGAG). Over residues 1087–1097 (APPPMPVYNKK) the composition is skewed to pro residues.

It belongs to the cyclin family. Cyclin C subfamily. As to quaternary structure, component of the super elongation complex (SEC), at least composed of Ell, Cdk9, cyclin-T (CycT), lilli and ear. Associates with CDK9 to form P-TEFb.

Its subcellular location is the nucleus. In terms of biological role, regulatory subunit of the cyclin-dependent kinase pair (CDK9/cyclin T) complex, also called positive transcription elongation factor B (P-TEFb), which is proposed to facilitate the transition from abortive to production elongation by phosphorylating the CTD (carboxy-terminal domain) of the large subunit of RNA polymerase II (RNAP II). The protein is Cyclin-T (CycT) of Drosophila melanogaster (Fruit fly).